Consider the following 267-residue polypeptide: Diphthine synthase (267 aa).

Residues L9, D85, V88, 113-114 (SI), L170, A211, and H236 each bind S-adenosyl-L-methionine.

The protein belongs to the diphthine synthase family. Homodimer.

The enzyme catalyses 2-[(3S)-amino-3-carboxypropyl]-L-histidyl-[translation elongation factor 2] + 3 S-adenosyl-L-methionine = diphthine-[translation elongation factor 2] + 3 S-adenosyl-L-homocysteine + 3 H(+). Its pathway is protein modification; peptidyl-diphthamide biosynthesis. Functionally, S-adenosyl-L-methionine-dependent methyltransferase that catalyzes the trimethylation of the amino group of the modified target histidine residue in translation elongation factor 2 (EF-2), to form an intermediate called diphthine. The three successive methylation reactions represent the second step of diphthamide biosynthesis. The sequence is that of Diphthine synthase from Methanococcoides burtonii (strain DSM 6242 / NBRC 107633 / OCM 468 / ACE-M).